The sequence spans 307 residues: Melanoma-associated antigen F1 (307 aa).

Positions 1–55 (MLQTPESRGLPVPQAEGEKDGGHDGETRAPTASQERPKEELGAGREEGAAEPALT) are disordered. Basic and acidic residues-rich tracts occupy residues 16-27 (EGEKDGGHDGET) and 35-48 (ERPK…REEG). The region spanning 76–277 (LNRTVAELVQ…HWPVQYREAL (202 aa)) is the MAGE domain.

As to quaternary structure, interacts (via MAGE domain) with RING-type zinc finger-containing E3 ubiquitin-protein ligases LNX1, TRIM27 and NSMCE1; the interaction is direct. As to expression, ubiquitous.

In terms of biological role, enhances ubiquitin ligase activity of RING-type zinc finger-containing E3 ubiquitin ligases. Proposed to act through recruitment and/or stabilization of the E2 ubiquitin-conjugating enzyme at the E3:substrate complex. MAGEF1-NSMCE1 ubiquitin ligase complex promotes proteasomal degradation of MMS19, a key component of the cytosolic iron-sulfur protein assembly (CIA) machinery. Down-regulation of MMS19 impairs the activity of several DNA repair and metabolism enzymes such as ERCC2/XPD, FANCJ, RTEL1 and POLD1 that require iron-sulfur clusters as cofactors. May negatively regulate genome integrity by inhibiting homologous recombination-mediated double-strand break DNA repair. This chain is Melanoma-associated antigen F1, found in Homo sapiens (Human).